A 496-amino-acid chain; its full sequence is WD repeat-containing protein 37 (496 aa).

Composition is skewed to polar residues over residues 1–13 (MPTE…TARQ) and 22–31 (SLSIRRTNSS). Positions 1-50 (MPTESGSCSTARQAKQKRKSHSLSIRRTNSSEQERTGLPREMLEGQDSKL) are disordered. Residues 32 to 47 (EQERTGLPREMLEGQD) show a composition bias toward basic and acidic residues. WD repeat units follow at residues 154–194 (GHRD…CLVK) and 197–236 (GHVG…PTPQ). The disordered stretch occupies residues 238 to 267 (VADTSQQISGEDEIECSDKDEPDIDGDVSS). Residues 247–265 (GEDEIECSDKDEPDIDGDV) are compositionally biased toward acidic residues. WD repeat units lie at residues 281–320 (SHQG…LVHS), 323–362 (GHDQ…IHSV), 367–405 (GHTD…SPIA), 408–447 (RTDS…LARL), and 454–495 (GHRR…LLQE).

As to quaternary structure, forms homodimers. Interacts with PACS1. Interacts with PACS2.

It is found in the cytoplasm. It localises to the nucleus. Required for normal ER Ca2+ handling in lymphocytes. Together with PACS1, it plays an essential role in stabilizing peripheral lymphocyte populations. The protein is WD repeat-containing protein 37 (Wdr37) of Mus musculus (Mouse).